The following is a 452-amino-acid chain: UDP-N-acetylmuramoylalanine--D-glutamate ligase (452 aa).

Residue 115-121 (GTNGKTT) coordinates ATP.

It belongs to the MurCDEF family.

It is found in the cytoplasm. It carries out the reaction UDP-N-acetyl-alpha-D-muramoyl-L-alanine + D-glutamate + ATP = UDP-N-acetyl-alpha-D-muramoyl-L-alanyl-D-glutamate + ADP + phosphate + H(+). It participates in cell wall biogenesis; peptidoglycan biosynthesis. Its function is as follows. Cell wall formation. Catalyzes the addition of glutamate to the nucleotide precursor UDP-N-acetylmuramoyl-L-alanine (UMA). This Geobacter metallireducens (strain ATCC 53774 / DSM 7210 / GS-15) protein is UDP-N-acetylmuramoylalanine--D-glutamate ligase.